The sequence spans 234 residues: Large ribosomal subunit protein uL1 (234 aa).

The protein belongs to the universal ribosomal protein uL1 family. In terms of assembly, part of the 50S ribosomal subunit.

Its function is as follows. Binds directly to 23S rRNA. The L1 stalk is quite mobile in the ribosome, and is involved in E site tRNA release. Functionally, protein L1 is also a translational repressor protein, it controls the translation of the L11 operon by binding to its mRNA. This chain is Large ribosomal subunit protein uL1, found in Syntrophobacter fumaroxidans (strain DSM 10017 / MPOB).